Reading from the N-terminus, the 3416-residue chain is Genome polyprotein (3416 aa).

Positions 1 to 34 (MAKGAVLKGKGGGPPRRVPKETAKKTRQGPGRLP) are disordered. Residues 1–99 (MAKGAVLKGK…NRRRGKRRST (99 aa)) are Cytoplasmic-facing. Residues 97 to 117 (RSTTGLLTSILLACLATLVIS) constitute a propeptide, ER anchor for the capsid protein C, removed in mature form by serine protease NS3. Residues 100-120 (TGLLTSILLACLATLVISATI) traverse the membrane as a helical segment. Topologically, residues 121-243 (RRERTGDMVI…HLTRVEGWVW (123 aa)) are extracellular. N-linked (GlcNAc...) asparagine; by host glycosylation occurs at N145. A helical transmembrane segment spans residues 244 to 261 (KNKLLTMAFCAVVWMVTD). A topological domain (cytoplasmic) is located at residue S262. The helical transmembrane segment at 263 to 281 (LPTRFIVITVALCLAPTYA) threads the bilayer. Residues 282-728 (TRCTHLQNRD…HTAFGAAFNT (447 aa)) are Extracellular-facing. 6 disulfide bridges follow: C284–C311, C341–C397, C341–C402, C355–C386, C373–C397, and C373–C402. The interval 379 to 392 (DRGWGNHCGLFGKG) is fusion peptide. An N-linked (GlcNAc...) asparagine; by host glycan is attached at N435. 2 disulfides stabilise this stretch: C467/C571 and C588/C619. The helical transmembrane segment at 729–749 (IFGGVGFLPRILLGVALAWLG) threads the bilayer. Residues 750 to 756 (LNSRNPT) are Cytoplasmic-facing. A helical transmembrane segment spans residues 757–777 (LSVGFLITGGLVLTMTLGVGA). Topologically, residues 778–1134 (DMGCAIDANR…RSMVLADNGA (357 aa)) are extracellular. Disulfide bonds link C781/C792, C832/C922, C957/C1002, C1059/C1108, C1070/C1092, and C1091/C1095. N-linked (GlcNAc...) asparagine; by host glycans are attached at residues N862, N985, and N1001. The chain crosses the membrane as a helical span at residues 1135-1155 (MLSEGGVPGIVAVFVVLELVI). At 1156 to 1162 (RRRPTTG) the chain is on the cytoplasmic side. Residues 1163–1183 (TSVVWCGVVVLGLVVTGLVTI) traverse the membrane as a helical segment. The Lumenal segment spans residues 1184–1189 (EGLCRY). Residues 1190-1210 (VVAVGILMSMELGPEIVALVL) traverse the membrane as a helical segment. The Cytoplasmic portion of the chain corresponds to 1211 to 1235 (LQAVFDMRTGLLVAFAVKRAYTTRE). A helical membrane pass occupies residues 1236–1256 (AVVTYFLLLVLELGFPEASLS). Residues 1257 to 1295 (NIWKWADSLAMGTLILQACSQEGRARVGYLLAAMMTQKD) lie on the Lumenal side of the membrane. Residues 1296–1316 (MAIIHTGLTIFLSAATAMAVW) form a helical membrane-spanning segment. At 1317–1361 (SMIKGQRDQKGLSWATPLVGLFGGEGVGLRLLAFRRLAERRNRRS) the chain is on the cytoplasmic side. The chain crosses the membrane as a helical span at residues 1362–1379 (FSEPLTVVGVMLTVASGM). The Lumenal segment spans residues 1380–1384 (VRHTS). A helical transmembrane segment spans residues 1385–1405 (QEALCALVAGAFLLLMMVLGT). Over 1406–1458 (RKMQLIAEWCGEVEWNPDLVNEGGEVNLKVRQDAMGNLHLTEVEKEERAMALW) the chain is Cytoplasmic. Residues 1412-1451 (AEWCGEVEWNPDLVNEGGEVNLKVRQDAMGNLHLTEVEKE) are interacts with and activates NS3 protease. The segment at residues 1459–1479 (LLAGLVASAFHWAGILIVLAI) is an intramembrane region (helical). The Cytoplasmic segment spans residues 1480-2162 (WTFFEMLSSG…RMAERDAPEA (683 aa)). In terms of domain architecture, Peptidase S7 spans 1492–1671 (SELVFSGQGT…EAEKSRPELP (180 aa)). Residues H1545, D1569, and S1629 each act as charge relay system; for serine protease NS3 activity in the active site. A Helicase ATP-binding domain is found at 1677 to 1833 (TGWMSKGQIT…ESNGAIMSEE (157 aa)). 1690 to 1697 (MHPGSGKT) provides a ligand contact to ATP. Positions 1781–1784 (DEAH) match the DEAH box motif. The Helicase C-terminal domain maps to 1844 to 2002 (GFDWITEYEG…TLRGPVATFY (159 aa)). The residue at position 1885 (K1885) is an N6-acetyllysine; by host. The chain crosses the membrane as a helical span at residues 2163-2183 (FLTIVEVAVLGVATLGILWCF). The Lumenal segment spans residues 2184 to 2191 (VARTSVSR). An intramembrane region (helical) is located at residues 2192–2211 (MFLGTVVLFAALLLLWIGGV). A topological domain (lumenal) is located at residue D2212. Residues 2213–2233 (YGYMAGIALIFYIFLTVLQPE) traverse the membrane as a helical segment. The Cytoplasmic segment spans residues 2234 to 2246 (PGKQRSSDDNRLA). The chain crosses the membrane as a helical span at residues 2247–2267 (YFLLGLLSLAGLVTANEMGML). The Lumenal portion of the chain corresponds to 2268-2301 (DKTKADLAGLMWHGEQRHPAWEEWTNVDIQPARS). The helical intramembrane region spans 2302-2322 (WGTYVLIVSLFTPYMLHQLQT). Residues 2323 to 2345 (KIQQLVNSSVASGAQAMRDLGGG) lie on the Lumenal side of the membrane. Positions 2346 to 2366 (TPFFGVAGHVIALGVTSLVGA) form an intramembrane region, helical. At 2367–2368 (TP) the chain is on the lumenal side. The chain crosses the membrane as a helical span at residues 2369–2389 (LSLGLGVALAAFHLAIVASGL). At 2390-2432 (EAELTQRAHRVFFSAMVKNPMVDGDVINPFPDGEPKPVLYERR) the chain is on the cytoplasmic side. A helical membrane pass occupies residues 2433-2453 (MSLILAIALCMVSVVLNRTAA). Over 2454 to 2476 (SMTEAGAVGLAALGQLVHPETET) the chain is Lumenal. A helical membrane pass occupies residues 2477–2497 (LWTMPMACGMAGLVRGSFWGL). At 2498-3416 (LPMGHRLWLK…WDLKLESNII (919 aa)) the chain is on the cytoplasmic side. The mRNA cap 0-1 NS5-type MT domain maps to 2514–2778 (GGADGETLGD…EVDLGTGTRC (265 aa)). Position 2569 (S2569) interacts with S-adenosyl-L-methionine. The residue at position 2569 (S2569) is a Phosphoserine. K2574 acts as the For 2'-O-MTase activity in catalysis. S-adenosyl-L-methionine-binding residues include G2599, W2600, T2617, I2618, D2644, and V2645. D2659 functions as the For 2'-O-MTase activity in the catalytic mechanism. I2660 serves as a coordination point for S-adenosyl-L-methionine. Residues K2696 and E2732 each act as for 2'-O-MTase activity in the active site. Residues 2732–2736 (EMYFS) are interaction with host SCRIB. Position 2734 (Y2734) interacts with S-adenosyl-L-methionine. Positions 2952, 2956, 2961, and 2964 each coordinate Zn(2+). The RdRp catalytic domain maps to 3042 to 3191 (GLFYADDTAG…RPIDDRFGKA (150 aa)). H3226, C3242, and C3361 together coordinate Zn(2+).

This sequence in the N-terminal section; belongs to the class I-like SAM-binding methyltransferase superfamily. mRNA cap 0-1 NS5-type methyltransferase family. Homodimer. Interacts (via N-terminus) with host EXOC1 (via C-terminus); this interaction results in EXOC1 degradation through the proteasome degradation pathway. In terms of assembly, forms heterodimers with envelope protein E in the endoplasmic reticulum and Golgi. As to quaternary structure, homodimer; in the endoplasmic reticulum and Golgi. Interacts with protein prM. Interacts with non-structural protein 1. Homodimer; Homohexamer when secreted. Interacts with envelope protein E. In terms of assembly, interacts (via N-terminus) with serine protease NS3. As to quaternary structure, forms a heterodimer with serine protease NS3. May form homooligomers. Forms a heterodimer with NS2B. Interacts with NS4B. Interacts with unphosphorylated RNA-directed RNA polymerase NS5; this interaction stimulates RNA-directed RNA polymerase NS5 guanylyltransferase activity. In terms of assembly, interacts with serine protease NS3. As to quaternary structure, homodimer. Interacts with host STAT2; this interaction inhibits the phosphorylation of the latter, and, when all viral proteins are present (polyprotein), targets STAT2 for degradation. Interacts with serine protease NS3. Post-translationally, specific enzymatic cleavages in vivo yield mature proteins. Cleavages in the lumen of endoplasmic reticulum are performed by host signal peptidase, whereas cleavages in the cytoplasmic side are performed by serine protease NS3. Signal cleavage at the 2K-4B site requires a prior NS3 protease-mediated cleavage at the 4A-2K site. Cleaved in post-Golgi vesicles by a host furin, releasing the mature small envelope protein M, and peptide pr. This cleavage is incomplete as up to 30% of viral particles still carry uncleaved prM. In terms of processing, N-glycosylated. Post-translationally, N-glycosylated. The excreted form is glycosylated and this is required for efficient secretion of the protein from infected cells. Acetylated by host KAT5. Acetylation modulates NS3 RNA-binding and unwinding activities and plays an important positive role for viral replication. In terms of processing, phosphorylated on serines residues. This phosphorylation may trigger NS5 nuclear localization.

It is found in the virion. The protein localises to the host nucleus. Its subcellular location is the host cytoplasm. It localises to the host perinuclear region. The protein resides in the secreted. It is found in the virion membrane. The protein localises to the host endoplasmic reticulum membrane. The catalysed reaction is Selective hydrolysis of -Xaa-Xaa-|-Yaa- bonds in which each of the Xaa can be either Arg or Lys and Yaa can be either Ser or Ala.. It carries out the reaction RNA(n) + a ribonucleoside 5'-triphosphate = RNA(n+1) + diphosphate. It catalyses the reaction a ribonucleoside 5'-triphosphate + H2O = a ribonucleoside 5'-diphosphate + phosphate + H(+). The enzyme catalyses ATP + H2O = ADP + phosphate + H(+). The catalysed reaction is a 5'-end (5'-triphosphoguanosine)-ribonucleoside in mRNA + S-adenosyl-L-methionine = a 5'-end (N(7)-methyl 5'-triphosphoguanosine)-ribonucleoside in mRNA + S-adenosyl-L-homocysteine. It carries out the reaction a 5'-end (N(7)-methyl 5'-triphosphoguanosine)-ribonucleoside in mRNA + S-adenosyl-L-methionine = a 5'-end (N(7)-methyl 5'-triphosphoguanosine)-(2'-O-methyl-ribonucleoside) in mRNA + S-adenosyl-L-homocysteine + H(+). Functionally, plays a role in virus budding by binding to the cell membrane and gathering the viral RNA into a nucleocapsid that forms the core of a mature virus particle. During virus entry, may induce genome penetration into the host cytoplasm after hemifusion induced by the surface proteins. Can migrate to the cell nucleus where it modulates host functions. Its function is as follows. Inhibits RNA silencing by interfering with host Dicer. Prevents premature fusion activity of envelope proteins in trans-Golgi by binding to envelope protein E at pH6.0. After virion release in extracellular space, gets dissociated from E dimers. In terms of biological role, acts as a chaperone for envelope protein E during intracellular virion assembly by masking and inactivating envelope protein E fusion peptide. prM is the only viral peptide matured by host furin in the trans-Golgi network probably to avoid catastrophic activation of the viral fusion activity in acidic Golgi compartment prior to virion release. prM-E cleavage is inefficient, and many virions are only partially matured. These uncleaved prM would play a role in immune evasion. Functionally, may play a role in virus budding. Exerts cytotoxic effects by activating a mitochondrial apoptotic pathway through M ectodomain. May display a viroporin activity. Its function is as follows. Binds to host cell surface receptor and mediates fusion between viral and cellular membranes. Envelope protein is synthesized in the endoplasmic reticulum in the form of heterodimer with protein prM. They play a role in virion budding in the ER, and the newly formed immature particle is covered with 60 spikes composed of heterodimer between precursor prM and envelope protein E. The virion is transported to the Golgi apparatus where the low pH causes dissociation of PrM-E heterodimers and formation of E homodimers. prM-E cleavage is inefficient, and many virions are only partially matured. These uncleaved prM would play a role in immune evasion. Involved in immune evasion, pathogenesis and viral replication. Once cleaved off the polyprotein, is targeted to three destinations: the viral replication cycle, the plasma membrane and the extracellular compartment. Essential for viral replication. Required for formation of the replication complex and recruitment of other non-structural proteins to the ER-derived membrane structures. Excreted as a hexameric lipoparticle that plays a role against host immune response. Antagonizing the complement function. Binds to the host macrophages and dendritic cells. Inhibits signal transduction originating from Toll-like receptor 3 (TLR3). In terms of biological role, component of the viral RNA replication complex that functions in virion assembly and antagonizes the host immune response. Functionally, required cofactor for the serine protease function of NS3. May have membrane-destabilizing activity and form viroporins. Its function is as follows. Displays three enzymatic activities: serine protease, NTPase and RNA helicase. NS3 serine protease, in association with NS2B, performs its autocleavage and cleaves the polyprotein at dibasic sites in the cytoplasm: C-prM, NS2A-NS2B, NS2B-NS3, NS3-NS4A, NS4A-2K and NS4B-NS5. NS3 RNA helicase binds RNA and unwinds dsRNA in the 3' to 5' direction. Regulates the ATPase activity of the NS3 helicase activity. NS4A allows NS3 helicase to conserve energy during unwinding. In terms of biological role, functions as a signal peptide for NS4B and is required for the interferon antagonism activity of the latter. Functionally, induces the formation of ER-derived membrane vesicles where the viral replication takes place. Inhibits interferon (IFN)-induced host STAT1 phosphorylation and nuclear translocation, thereby preventing the establishment of cellular antiviral state by blocking the IFN-alpha/beta pathway. Inhibits STAT2 translocation in the nucleus after IFN-alpha treatment. Its function is as follows. Replicates the viral (+) and (-) RNA genome, and performs the capping of genomes in the cytoplasm. NS5 methylates viral RNA cap at guanine N-7 and ribose 2'-O positions. Besides its role in RNA genome replication, also prevents the establishment of cellular antiviral state by blocking the interferon-alpha/beta (IFN-alpha/beta) signaling pathway. Inhibits host TYK2 and STAT2 phosphorylation, thereby preventing activation of JAK-STAT signaling pathway. The chain is Genome polyprotein from Homo sapiens (Human).